Consider the following 495-residue polypeptide: Pre-glycoprotein polyprotein GP complex (495 aa).

Gly-2 carries the N-myristoyl glycine; by host lipid modification. Over Gly-2–Glu-17 the chain is Extracellular. Residues Ala-18–Lys-33 form a helical membrane-spanning segment. Residues Gly-34–Ser-58 lie on the Cytoplasmic side of the membrane. Cys-57 provides a ligand contact to Zn(2+). Topologically, residues Glu-59–Asp-434 are extracellular. 4 cysteine pairs are disulfide-bonded: Cys-92–Cys-236, Cys-281–Cys-294, Cys-303–Cys-312, and Cys-366–Cys-387. Residues Asn-95 and Asn-188 are each glycosylated (N-linked (GlcNAc...) asparagine; by host). N-linked (GlcNAc...) asparagine; by host glycans are attached at residues Asn-367, Asn-375, Asn-392, and Asn-397. A helical membrane pass occupies residues Ile-435–Pro-455. Over Thr-456–His-495 the chain is Cytoplasmic. 7 residues coordinate Zn(2+): His-457, His-459, Cys-465, His-469, Cys-477, Cys-479, and His-495.

Belongs to the arenaviridae GPC protein family. In terms of assembly, interacts with glycoprotein G2. Part of the GP complex (GP-C) together with glycoprotein G1 and glycoprotein G2. The GP-complex interacts with protein Z, which interacts with ribonucleocapsid; these interactions may induce virion budding. Homotrimer; disulfide-linked. In pre-fusion state, G1 homotrimers bind G2 homotrimers via ionic interactions. Part of the GP complex (GP-C) together with glycoprotein G2 and the stable signal peptide. The GP-complex interacts with protein Z, which interacts with ribonucleocapsid; these interactions may induce virion budding. As to quaternary structure, homotrimer. Interacts with the stable signal peptide. In pre-fusion state, G2 homotrimers bind G1 homotrimers via ionic interactions. Part of the GP complex (GP-C) together with glycoprotein G1 and the stable signal peptide. Acidification in the endosome triggers rearrangements, which ultimately leads to a 6 helix bundle formed by the two heptad repeat domains (HR1 and HR2) in post-fusion state. The GP-complex interacts with protein Z, which interacts with ribonucleocapsid; these interactions may induce virion budding. Post-translationally, specific enzymatic cleavages in vivo yield mature proteins. GP-C polyprotein is cleaved in the endoplasmic reticulum by the host protease MBTPS1. Only cleaved glycoprotein is incorporated into virions. The SSP remains stably associated with the GP complex following cleavage by signal peptidase and plays crucial roles in the trafficking of GP through the secretory pathway. In terms of processing, myristoylation is necessary for GP2-mediated fusion activity.

The protein localises to the virion membrane. Its subcellular location is the host endoplasmic reticulum membrane. It is found in the host Golgi apparatus membrane. The protein resides in the host cell membrane. Functions as a cleaved signal peptide that is retained as the third component of the GP complex (GP-C). Helps to stabilize the spike complex in its native conformation. The SSP is required for efficient glycoprotein expression, post-translational maturation cleavage of G1 and G2, glycoprotein transport to the cell surface plasma membrane, formation of infectious virus particles, and acid pH-dependent glycoprotein-mediated cell fusion. Its function is as follows. Forms the virion spikes together with glycoprotein G2. The glycoprotein spike trimers are connected to the underlying matrix. Interacts with the host receptor leading to virus endocytosis. In terms of biological role, forms the virion spikes together with glycoprotein G1. The glycoprotein spike trimers are connected to the underlying matrix. Class I viral fusion protein that directs fusion of viral and host endosomal membranes, leading to delivery of the nucleocapsid into the cytoplasm. Membrane fusion is mediated by irreversible conformational changes induced by acidification. The polypeptide is Pre-glycoprotein polyprotein GP complex (Tacaribe virus (strain Franze-Fernandez) (TCRV)).